We begin with the raw amino-acid sequence, 68 residues long: Protein transport protein Sec61 subunit gamma (68 aa).

Met-1 is subject to N-acetylmethionine. Topologically, residues 1–32 (MDQVMQFVEPSRQFVKDSIRLVKRCTKPDRKE) are cytoplasmic. The residue at position 18 (Ser-18) is a Phosphoserine. Residues 33–61 (FQKIAMATAIGFAIMGFIGFFVKLIHIPI) traverse the membrane as a helical segment. Residues 62–68 (NNIIVGG) are Extracellular-facing.

It belongs to the SecE/SEC61-gamma family. As to quaternary structure, the SEC61 channel-forming translocon complex consists of channel-forming core components SEC61A1, SEC61B and SEC61G and different auxiliary components such as SEC62 and SEC63. The SEC61 channel associates with the multi-pass translocon (MPT) complex.

The protein resides in the endoplasmic reticulum membrane. Functionally, component of SEC61 channel-forming translocon complex that mediates transport of signal peptide-containing precursor polypeptides across the endoplasmic reticulum (ER). Forms a ribosome receptor and a gated pore in the ER membrane, both functions required for cotranslational translocation of nascent polypeptides. The SEC61 channel is also involved in ER membrane insertion of transmembrane proteins: it mediates membrane insertion of the first few transmembrane segments of proteins, while insertion of subsequent transmembrane regions of multi-pass membrane proteins is mediated by the multi-pass translocon (MPT) complex. The SEC61 channel cooperates with the translocating protein TRAM1 to import nascent proteins into the ER. This is Protein transport protein Sec61 subunit gamma (SEC61G) from Bos taurus (Bovine).